Consider the following 249-residue polypeptide: Large ribosomal subunit protein uL4 (249 aa).

Belongs to the universal ribosomal protein uL4 family. In terms of assembly, part of the 50S ribosomal subunit.

In terms of biological role, one of the primary rRNA binding proteins, this protein initially binds near the 5'-end of the 23S rRNA. It is important during the early stages of 50S assembly. It makes multiple contacts with different domains of the 23S rRNA in the assembled 50S subunit and ribosome. Forms part of the polypeptide exit tunnel. The chain is Large ribosomal subunit protein uL4 from Methanospirillum hungatei JF-1 (strain ATCC 27890 / DSM 864 / NBRC 100397 / JF-1).